We begin with the raw amino-acid sequence, 160 residues long: Large ribosomal subunit protein uL16 (160 aa).

Belongs to the universal ribosomal protein uL16 family. As to quaternary structure, part of the 50S ribosomal subunit.

Binds 23S rRNA and is also seen to make contacts with the A and possibly P site tRNAs. This Prochlorococcus marinus (strain MIT 9301) protein is Large ribosomal subunit protein uL16.